The following is a 546-amino-acid chain: Glucose-6-phosphate isomerase (546 aa).

The Proton donor role is filled by E355. Catalysis depends on residues H386 and K510.

The protein belongs to the GPI family.

It localises to the cytoplasm. The catalysed reaction is alpha-D-glucose 6-phosphate = beta-D-fructose 6-phosphate. The protein operates within carbohydrate biosynthesis; gluconeogenesis. It participates in carbohydrate degradation; glycolysis; D-glyceraldehyde 3-phosphate and glycerone phosphate from D-glucose: step 2/4. Its function is as follows. Catalyzes the reversible isomerization of glucose-6-phosphate to fructose-6-phosphate. The protein is Glucose-6-phosphate isomerase of Buchnera aphidicola subsp. Cinara cedri (strain Cc).